The primary structure comprises 321 residues: Sialic acid-binding periplasmic protein SiaP (321 aa).

The signal sequence occupies residues 1 to 22 (MKTINKITIAILTLSAAASVNA).

Belongs to the bacterial solute-binding protein 7 family. The complex comprises the extracytoplasmic solute receptor protein SiaP, and the two transmembrane proteins SiaQ and SiaM.

The protein resides in the periplasm. Its function is as follows. Part of the tripartite ATP-independent periplasmic (TRAP) transport system SiaPQM that catalyzes unidirectional Na(+)-dependent sialic acid uptake. Binds the common sialic acid N-acetylneuraminic acid (Neu5Ac) with a high affinity. The protein is Sialic acid-binding periplasmic protein SiaP of Vibrio cholerae serotype O1 (strain ATCC 39315 / El Tor Inaba N16961).